The chain runs to 676 residues: DNA ligase (676 aa).

NAD(+) contacts are provided by residues D35 to D39, S84 to L85, and E115. K117 serves as the catalytic N6-AMP-lysine intermediate. Positions 138, 177, 296, and 320 each coordinate NAD(+). The Zn(2+) site is built by C414, C417, C432, and C437. Residues N599–A676 enclose the BRCT domain.

It belongs to the NAD-dependent DNA ligase family. LigA subfamily. Mg(2+) is required as a cofactor. Mn(2+) serves as cofactor.

It catalyses the reaction NAD(+) + (deoxyribonucleotide)n-3'-hydroxyl + 5'-phospho-(deoxyribonucleotide)m = (deoxyribonucleotide)n+m + AMP + beta-nicotinamide D-nucleotide.. Functionally, DNA ligase that catalyzes the formation of phosphodiester linkages between 5'-phosphoryl and 3'-hydroxyl groups in double-stranded DNA using NAD as a coenzyme and as the energy source for the reaction. It is essential for DNA replication and repair of damaged DNA. This chain is DNA ligase, found in Trichormus variabilis (strain ATCC 29413 / PCC 7937) (Anabaena variabilis).